The chain runs to 561 residues: MKTEQTPWWKKAVVYQIYPKSFNDTTGNGVGDLNGIIEKLDYLKTLQVDVLWLTPIYDSPQHDNGYDIRDYYSIYPEYGTMEDFERLVSEAHKRDLKVVMDLVVNHTSTEHKWFREAISSIDSPYRDFYIWKKPQENGSVPTNWESKFGGSAWELDEASGQYYLHLFDVTQADLNWENEEVRKHVYDMMHFWFEKGIDGFRLDVINLISKDQRFPNAEEGDGRSFYTDGPRVHEFLHEMNEKVFSHYDSMTVGEMSSTTVDHCIRYTNPDNKELDMTFSFHHLKVDYPNGEKWALAPFDFLKLKEILSDWQTGMHAGGGWNALFWCNHDQPRVVSRYGDDGAYRVKSAKMLATAIHMMQGTPYIYQGEELGMTNPKFTDISSYRDVESLNMYHAFKEKGMADQDITAILQAKSRDNSRTPVQWDATENGGFTTGTPWIPVAGNYREINAEAALRDQNSVFYHYQKLIQIRKMYDIVTEGTYEIIAKDDPNIFAYLRHGSNEKLLVINNFYGTEAAFTLPDSLAPDEWKAEVLLTNDEAREGLQNMTLRPYESIVYRLTKPC.

The active-site Nucleophile is aspartate 203. The Proton donor role is filled by glutamate 254.

It belongs to the glycosyl hydrolase 13 family.

It localises to the cytoplasm. It carries out the reaction alpha,alpha-trehalose 6-phosphate + H2O = D-glucose 6-phosphate + D-glucose. Activity is stimulated by high salt concentrations with different efficiencies depending on the kind of salt. In vitro, inhibited by glucose. Functionally, hydrolyzes trehalose-6-phosphate to glucose and glucose 6-phosphate. Can also very effectively hydrolyze p-nitrophenyl-alpha-D-glucopyranoside, but not lactose, maltose, sucrose or sucrose-6-phosphate. Trehalose is also hydrolyzed, but to a much smaller extent than trehalose-6-phosphate. The protein is Trehalose-6-phosphate hydrolase of Bacillus subtilis (strain 168).